The following is a 150-amino-acid chain: SsrA-binding protein (150 aa).

The disordered stretch occupies residues 129 to 150; that stretch reads KRQTLKSKEADREMARALRDRH.

This sequence belongs to the SmpB family.

It is found in the cytoplasm. Required for rescue of stalled ribosomes mediated by trans-translation. Binds to transfer-messenger RNA (tmRNA), required for stable association of tmRNA with ribosomes. tmRNA and SmpB together mimic tRNA shape, replacing the anticodon stem-loop with SmpB. tmRNA is encoded by the ssrA gene; the 2 termini fold to resemble tRNA(Ala) and it encodes a 'tag peptide', a short internal open reading frame. During trans-translation Ala-aminoacylated tmRNA acts like a tRNA, entering the A-site of stalled ribosomes, displacing the stalled mRNA. The ribosome then switches to translate the ORF on the tmRNA; the nascent peptide is terminated with the 'tag peptide' encoded by the tmRNA and targeted for degradation. The ribosome is freed to recommence translation, which seems to be the essential function of trans-translation. The sequence is that of SsrA-binding protein from Syntrophotalea carbinolica (strain DSM 2380 / NBRC 103641 / GraBd1) (Pelobacter carbinolicus).